The following is a 350-amino-acid chain: Hydroxymethylglutaryl-CoA synthase (350 aa).

Asp-30 provides a ligand contact to (3S)-3-hydroxy-3-methylglutaryl-CoA. The Proton donor/acceptor role is filled by Glu-82. (3S)-3-hydroxy-3-methylglutaryl-CoA contacts are provided by Cys-114, Ser-155, Thr-203, and His-236. The active-site Acyl-thioester intermediate is Cys-114. His-236 serves as the catalytic Proton donor/acceptor. Arg-241 is a binding site for CoA. (3S)-3-hydroxy-3-methylglutaryl-CoA-binding residues include Arg-245, Asn-268, and Ser-298.

The protein belongs to the thiolase-like superfamily. Archaeal HMG-CoA synthase family. In terms of assembly, interacts with acetoacetyl-CoA thiolase that catalyzes the precedent step in the pathway and with a DUF35 protein. The acetoacetyl-CoA thiolase/HMG-CoA synthase complex channels the intermediate via a fused CoA-binding site, which allows for efficient coupling of the endergonic thiolase reaction with the exergonic HMGCS reaction.

The catalysed reaction is acetoacetyl-CoA + acetyl-CoA + H2O = (3S)-3-hydroxy-3-methylglutaryl-CoA + CoA + H(+). It functions in the pathway metabolic intermediate biosynthesis; (R)-mevalonate biosynthesis; (R)-mevalonate from acetyl-CoA: step 2/3. Its function is as follows. Catalyzes the condensation of acetyl-CoA with acetoacetyl-CoA to form 3-hydroxy-3-methylglutaryl-CoA (HMG-CoA). Functions in the mevalonate (MVA) pathway leading to isopentenyl diphosphate (IPP), a key precursor for the biosynthesis of isoprenoid compounds that are building blocks of archaeal membrane lipids. This chain is Hydroxymethylglutaryl-CoA synthase, found in Pyrobaculum aerophilum (strain ATCC 51768 / DSM 7523 / JCM 9630 / CIP 104966 / NBRC 100827 / IM2).